The primary structure comprises 99 residues: Phosphoribosyl-ATP pyrophosphatase (99 aa).

This sequence belongs to the PRA-PH family.

The protein resides in the cytoplasm. The enzyme catalyses 1-(5-phospho-beta-D-ribosyl)-ATP + H2O = 1-(5-phospho-beta-D-ribosyl)-5'-AMP + diphosphate + H(+). It functions in the pathway amino-acid biosynthesis; L-histidine biosynthesis; L-histidine from 5-phospho-alpha-D-ribose 1-diphosphate: step 2/9. The sequence is that of Phosphoribosyl-ATP pyrophosphatase from Methanosphaerula palustris (strain ATCC BAA-1556 / DSM 19958 / E1-9c).